A 546-amino-acid polypeptide reads, in one-letter code: Alpha-taxilin (546 aa).

Disordered regions lie at residues 1–170 (MKNQ…GLGK) and 482–546 (NKRV…SARA). Residues 11-21 (AKQSNPKSSPG) are compositionally biased toward polar residues. Basic and acidic residues-rich tracts occupy residues 70 to 80 (DVSEELSRQLE) and 143 to 158 (EEIR…DHRR). Ser-72 carries the phosphoserine modification. The stretch at 186–491 (EEKLAALCKK…NKRVQDLSAG (306 aa)) forms a coiled coil. At Ser-515 the chain carries Phosphoserine. Residues 530–546 (TEASGQTGPQEPTSARA) are compositionally biased toward polar residues.

Belongs to the taxilin family. In terms of assembly, binds to the C-terminal coiled coil region of syntaxin family members STX1A, STX3A and STX4A, but not when these proteins are complexed with SNAP25, VAMP2 or STXBP1, suggesting that it interacts with syntaxins that do not form the SNARE complex. In terms of tissue distribution, ubiquitous, with much higher expression in heart, kidney, liver and pancreas.

In terms of biological role, may be involved in intracellular vesicle traffic and potentially in calcium-dependent exocytosis in neuroendocrine cells. The chain is Alpha-taxilin (TXLNA) from Homo sapiens (Human).